The following is a 156-amino-acid chain: ATP synthase subunit b (156 aa).

Residues 7–27 traverse the membrane as a helical segment; that stretch reads LFAQIIVFFGLVWFTMKFVWP.

It belongs to the ATPase B chain family. In terms of assembly, F-type ATPases have 2 components, F(1) - the catalytic core - and F(0) - the membrane proton channel. F(1) has five subunits: alpha(3), beta(3), gamma(1), delta(1), epsilon(1). F(0) has three main subunits: a(1), b(2) and c(10-14). The alpha and beta chains form an alternating ring which encloses part of the gamma chain. F(1) is attached to F(0) by a central stalk formed by the gamma and epsilon chains, while a peripheral stalk is formed by the delta and b chains.

Its subcellular location is the cell inner membrane. In terms of biological role, f(1)F(0) ATP synthase produces ATP from ADP in the presence of a proton or sodium gradient. F-type ATPases consist of two structural domains, F(1) containing the extramembraneous catalytic core and F(0) containing the membrane proton channel, linked together by a central stalk and a peripheral stalk. During catalysis, ATP synthesis in the catalytic domain of F(1) is coupled via a rotary mechanism of the central stalk subunits to proton translocation. Component of the F(0) channel, it forms part of the peripheral stalk, linking F(1) to F(0). This Neisseria meningitidis serogroup C (strain 053442) protein is ATP synthase subunit b.